Here is a 150-residue protein sequence, read N- to C-terminus: uncharacterized protein (150 aa).

3 consecutive transmembrane segments (helical) span residues 48-68, 89-109, and 123-143; these read LFLL…CFLF, VFIF…YLLP, and REVF…IFTL.

The protein to M.pneumoniae MPN_085 central region.

The protein localises to the cell membrane. This is an uncharacterized protein from Mycoplasma pneumoniae (strain ATCC 29342 / M129 / Subtype 1) (Mycoplasmoides pneumoniae).